Reading from the N-terminus, the 336-residue chain is Fructose-1,6-bisphosphatase class 1 (336 aa).

4 residues coordinate Mg(2+): E92, D115, L117, and D118. Residues 118-121 (DGSS), N211, Y244, 262-264 (YLY), and K274 contribute to the substrate site. E280 lines the Mg(2+) pocket.

It belongs to the FBPase class 1 family. As to quaternary structure, homotetramer. The cofactor is Mg(2+).

Its subcellular location is the cytoplasm. The enzyme catalyses beta-D-fructose 1,6-bisphosphate + H2O = beta-D-fructose 6-phosphate + phosphate. It participates in carbohydrate biosynthesis; gluconeogenesis. The sequence is that of Fructose-1,6-bisphosphatase class 1 from Aliivibrio salmonicida (strain LFI1238) (Vibrio salmonicida (strain LFI1238)).